Reading from the N-terminus, the 459-residue chain is Type I restriction enzyme HindI specificity subunit (459 aa).

The protein belongs to the type-I restriction system S methylase family. The type I restriction/modification system is composed of three polypeptides R, M and S; the restriction enzyme has stoichiometry R(2)M(2)S(1) while the methyltransferase is M(2)S(1).

Its function is as follows. The specificity (S) subunit of a type I restriction enzyme; this subunit dictates DNA sequence specificity. The M and S subunits together form a methyltransferase (MTase) that methylates adenosines in the sequence 5'-RAACN(5)TAG-3'. Methylation protects against cleavage by HindI. In the presence of the R subunit the complex can also act as an endonuclease, binding to the same target sequence but cutting the DNA some distance from this site. Whether the DNA is cut or modified depends on the methylation state of the target sequence. When the target site is unmodified, the DNA is cut. When the target site is hemimethylated, the complex acts as a maintenance MTase modifying the DNA so that both strands become methylated. After locating a non-methylated recognition site, the enzyme complex serves as a molecular motor that translocates DNA in an ATP-dependent manner until a collision occurs that triggers cleavage. In Haemophilus influenzae (strain ATCC 51907 / DSM 11121 / KW20 / Rd), this protein is Type I restriction enzyme HindI specificity subunit.